Consider the following 89-residue polypeptide: Small ribosomal subunit protein uS15 (89 aa).

This sequence belongs to the universal ribosomal protein uS15 family. Part of the 30S ribosomal subunit. Forms a bridge to the 50S subunit in the 70S ribosome, contacting the 23S rRNA.

One of the primary rRNA binding proteins, it binds directly to 16S rRNA where it helps nucleate assembly of the platform of the 30S subunit by binding and bridging several RNA helices of the 16S rRNA. In terms of biological role, forms an intersubunit bridge (bridge B4) with the 23S rRNA of the 50S subunit in the ribosome. This is Small ribosomal subunit protein uS15 from Lacticaseibacillus casei (strain BL23) (Lactobacillus casei).